A 397-amino-acid chain; its full sequence is Succinate--CoA ligase [ADP-forming] subunit beta (397 aa).

In terms of domain architecture, ATP-grasp spans 9 to 254 (KALLKSFGAP…TTEEDEKEIE (246 aa)). ATP is bound by residues K46, 53 to 55 (GRG), E109, A112, and E117. N209 and D223 together coordinate Mg(2+). Residues N274 and 331-333 (GIM) contribute to the substrate site.

This sequence belongs to the succinate/malate CoA ligase beta subunit family. In terms of assembly, heterotetramer of two alpha and two beta subunits. The cofactor is Mg(2+).

It catalyses the reaction succinate + ATP + CoA = succinyl-CoA + ADP + phosphate. The catalysed reaction is GTP + succinate + CoA = succinyl-CoA + GDP + phosphate. Its pathway is carbohydrate metabolism; tricarboxylic acid cycle; succinate from succinyl-CoA (ligase route): step 1/1. In terms of biological role, succinyl-CoA synthetase functions in the citric acid cycle (TCA), coupling the hydrolysis of succinyl-CoA to the synthesis of either ATP or GTP and thus represents the only step of substrate-level phosphorylation in the TCA. The beta subunit provides nucleotide specificity of the enzyme and binds the substrate succinate, while the binding sites for coenzyme A and phosphate are found in the alpha subunit. The chain is Succinate--CoA ligase [ADP-forming] subunit beta from Mesorhizobium japonicum (strain LMG 29417 / CECT 9101 / MAFF 303099) (Mesorhizobium loti (strain MAFF 303099)).